A 175-amino-acid polypeptide reads, in one-letter code: Gamma-crystallin B (175 aa).

Beta/gamma crystallin 'Greek key' domains follow at residues 2 to 40 (GKITFYEDRAFQGRSYECTTDCPNLQPYFSRCNSIRVES) and 41 to 83 (GCWM…CLIP). The interval 84-88 (PHSGA) is connecting peptide. 2 consecutive Beta/gamma crystallin 'Greek key' domains span residues 89–129 (YRMK…NVLE) and 130–172 (GSWI…RRVM).

It belongs to the beta/gamma-crystallin family. As to quaternary structure, monomer.

Its function is as follows. Crystallins are the dominant structural components of the vertebrate eye lens. The protein is Gamma-crystallin B (CRYGB) of Homo sapiens (Human).